Reading from the N-terminus, the 154-residue chain is Myoglobin (154 aa).

The 147-residue stretch at 2–148 (GLSDGEWQLV…FRNDIAAKYK (147 aa)) folds into the Globin domain. The residue at position 4 (S4) is a Phosphoserine. H65 provides a ligand contact to nitrite. Residue H65 coordinates O2. A Phosphothreonine modification is found at T68. Heme b is bound at residue H94.

This sequence belongs to the globin family. Monomeric.

Its subcellular location is the cytoplasm. The protein resides in the sarcoplasm. The catalysed reaction is Fe(III)-heme b-[protein] + nitric oxide + H2O = Fe(II)-heme b-[protein] + nitrite + 2 H(+). The enzyme catalyses H2O2 + AH2 = A + 2 H2O. Functionally, monomeric heme protein which primary function is to store oxygen and facilitate its diffusion within muscle tissues. Reversibly binds oxygen through a pentacoordinated heme iron and enables its timely and efficient release as needed during periods of heightened demand. Depending on the oxidative conditions of tissues and cells, and in addition to its ability to bind oxygen, it also has a nitrite reductase activity whereby it regulates the production of bioactive nitric oxide. Under stress conditions, like hypoxia and anoxia, it also protects cells against reactive oxygen species thanks to its pseudoperoxidase activity. This chain is Myoglobin (MB), found in Lutra lutra (European river otter).